Reading from the N-terminus, the 319-residue chain is MSLNYLDFELPIAELEVKIEELQNVSRAGELDLELEEEVSKLKEKSDRLKEKIFSELGAWQVSQLARHPLRPYTRDYIERIFTEFDEFAGDRTFANDPAILGGIARLDGEPVMVIGQQKGRGTAEKIKRNFGMPKPEGYRKALRLMEMAERFKMPIMTFIDTPGAYPGVGAEERGQSEAIARNLKVMASLKVPTICTVIGEGGSGGALAIGVGDRVNMLQYSTYSVISPEGCASILWKSADKAPLAAEAMGVTAKRVKELDLINNLVDEPLGGAHRNYDAMARNLKVRLKRDLADLQALSLEEMLDQRYKRLMSFGYCS.

The region spanning Glu34–Asp295 is the CoA carboxyltransferase C-terminal domain.

Belongs to the AccA family. Acetyl-CoA carboxylase is a heterohexamer composed of biotin carboxyl carrier protein (AccB), biotin carboxylase (AccC) and two subunits each of ACCase subunit alpha (AccA) and ACCase subunit beta (AccD).

The protein resides in the cytoplasm. It catalyses the reaction N(6)-carboxybiotinyl-L-lysyl-[protein] + acetyl-CoA = N(6)-biotinyl-L-lysyl-[protein] + malonyl-CoA. It functions in the pathway lipid metabolism; malonyl-CoA biosynthesis; malonyl-CoA from acetyl-CoA: step 1/1. Component of the acetyl coenzyme A carboxylase (ACC) complex. First, biotin carboxylase catalyzes the carboxylation of biotin on its carrier protein (BCCP) and then the CO(2) group is transferred by the carboxyltransferase to acetyl-CoA to form malonyl-CoA. The chain is Acetyl-coenzyme A carboxylase carboxyl transferase subunit alpha from Pseudoalteromonas translucida (strain TAC 125).